Consider the following 192-residue polypeptide: Fibroblast growth factor 4B (192 aa).

Positions 1–22 are cleaved as a signal peptide; it reads MTVQLALVPILLLGTAAVMVHC.

This sequence belongs to the heparin-binding growth factors family.

The protein resides in the secreted. Its function is as follows. Plays an important role in the regulation of embryonic development, cell proliferation, and cell differentiation. Good candidate for an inducing factor with possible roles both in mesoderm induction at the blastula stage and in the formation of the anteroposterior axis at the gastrula stage. The protein is Fibroblast growth factor 4B (fgf4-b) of Xenopus laevis (African clawed frog).